The sequence spans 328 residues: GTP 3',8-cyclase (328 aa).

Residues 1–229 (MNQVDYLRIS…ESQVRGAGPA (229 aa)) form the Radical SAM core domain. Position 8 (Arg-8) interacts with GTP. Cys-15 and Cys-19 together coordinate [4Fe-4S] cluster. Tyr-21 provides a ligand contact to S-adenosyl-L-methionine. Residue Cys-22 participates in [4Fe-4S] cluster binding. Arg-60 is a binding site for GTP. S-adenosyl-L-methionine is bound at residue Gly-64. Thr-91 contributes to the GTP binding site. Residue Ser-115 participates in S-adenosyl-L-methionine binding. Lys-155 is a binding site for GTP. Met-189 is a binding site for S-adenosyl-L-methionine. Residues Cys-252 and Cys-255 each coordinate [4Fe-4S] cluster. 257–259 (RMR) is a GTP binding site. Cys-269 serves as a coordination point for [4Fe-4S] cluster.

Belongs to the radical SAM superfamily. MoaA family. As to quaternary structure, monomer and homodimer. The cofactor is [4Fe-4S] cluster.

It carries out the reaction GTP + AH2 + S-adenosyl-L-methionine = (8S)-3',8-cyclo-7,8-dihydroguanosine 5'-triphosphate + 5'-deoxyadenosine + L-methionine + A + H(+). It functions in the pathway cofactor biosynthesis; molybdopterin biosynthesis. Its function is as follows. Catalyzes the cyclization of GTP to (8S)-3',8-cyclo-7,8-dihydroguanosine 5'-triphosphate. This chain is GTP 3',8-cyclase, found in Nostoc punctiforme (strain ATCC 29133 / PCC 73102).